Here is a 141-residue protein sequence, read N- to C-terminus: ATP synthase epsilon chain (141 aa).

This sequence belongs to the ATPase epsilon chain family. As to quaternary structure, F-type ATPases have 2 components, CF(1) - the catalytic core - and CF(0) - the membrane proton channel. CF(1) has five subunits: alpha(3), beta(3), gamma(1), delta(1), epsilon(1). CF(0) has three main subunits: a, b and c.

Its subcellular location is the cell inner membrane. Produces ATP from ADP in the presence of a proton gradient across the membrane. The chain is ATP synthase epsilon chain from Burkholderia multivorans (strain ATCC 17616 / 249).